The sequence spans 377 residues: uncharacterized protein (377 aa).

An N-terminal signal peptide occupies residues 1 to 22 (MKFKYGTVVLGSFLGLSVVLAA). The N-palmitoyl cysteine moiety is linked to residue Cys-23. Cys-23 carries S-diacylglycerol cysteine lipidation. Residues 217 to 260 (AKANGETNQKGRKAAKSNKTALVQLKNGADTTTNEENKDTKTSD) are disordered. Over residues 251–260 (EENKDTKTSD) the composition is skewed to basic and acidic residues.

The protein belongs to the MG185/MG260 family.

Its subcellular location is the cell membrane. This is an uncharacterized protein from Mycoplasma pneumoniae (strain ATCC 29342 / M129 / Subtype 1) (Mycoplasmoides pneumoniae).